A 428-amino-acid chain; its full sequence is Methyl-branched lipid omega-hydroxylase (428 aa).

Position 379 (Cys-379) interacts with heme.

This sequence belongs to the cytochrome P450 family. The cofactor is heme.

The enzyme catalyses a methyl-branched lipid + O2 + 2 reduced ferredoxin [iron-sulfur] cluster + 2 H(+) = an omega-hydroxy-methyl-branched lipid + H2O + 2 oxidized ferredoxin [iron-sulfur] cluster.. It carries out the reaction cholest-4-en-3-one + 6 reduced [2Fe-2S]-[ferredoxin] + 3 O2 + 5 H(+) = (25R)-3-oxocholest-4-en-26-oate + 6 oxidized [2Fe-2S]-[ferredoxin] + 4 H2O. It functions in the pathway lipid metabolism; branched-chain fatty acid metabolism. Its function is as follows. Primarily hydroxylates the omega-carbon of a number of methyl-branched lipids, including (2E,6E)-farnesol, phytanate, geranylgeraniol, 15-methylpalmitate and (2E,6E)-farnesyl diphosphate. Also catalyzes the sequential oxidation of the terminal methyl of cholest-4-en-3-one into (25R)-26-hydroxycholest-4-en-3-one (alcohol), (25R)-26-oxocholest-4-en-3-one (aldehyde), to finally yield the carboxylic acid (25R)-3-oxocholest-4-en-26-oate. Also able to sequentially oxidize cholesterol itself, not only cholest-4-en-3-one. The polypeptide is Methyl-branched lipid omega-hydroxylase (cyp124) (Mycobacterium tuberculosis (strain CDC 1551 / Oshkosh)).